A 692-amino-acid polypeptide reads, in one-letter code: Proprotein convertase subtilisin/kexin type 9 (692 aa).

The N-terminal stretch at 1 to 30 is a signal peptide; the sequence is MGTVSSRRSWWPLPLPLLLLLLLGLAGARA. The propeptide occupies 31–152; sequence QEDEDGDYEE…IEEDSSVFAQ (122 aa). Tyrosine 38 carries the sulfotyrosine modification. Residue serine 47 is modified to Phosphoserine. The region spanning 77–149 is the Inhibitor I9 domain; sequence TYVVVLKEET…VDYIEEDSSV (73 aa). One can recognise a Peptidase S8 domain in the interval 155–444; the sequence is PWNLERITPA…VLTPNLVAAL (290 aa). Residues aspartate 186 and histidine 226 each act as charge relay system in the active site. Disulfide bonds link cysteine 223–cysteine 255 and cysteine 323–cysteine 358. The active-site Charge relay system is the serine 386. Residues 450-692 form a C-terminal domain region; sequence RAGWQLFCRT…HLVQASQELQ (243 aa). 3 disulfide bridges follow: cysteine 457–cysteine 527, cysteine 477–cysteine 526, and cysteine 486–cysteine 509. N-linked (GlcNAc...) asparagine glycosylation is present at asparagine 533. 6 cysteine pairs are disulfide-bonded: cysteine 534–cysteine 601, cysteine 552–cysteine 600, cysteine 562–cysteine 588, cysteine 608–cysteine 679, cysteine 626–cysteine 678, and cysteine 635–cysteine 654. Serine 688 is modified (phosphoserine).

The protein belongs to the peptidase S8 family. As to quaternary structure, monomer. Can self-associate to form dimers and higher multimers which may have increased LDLR degrading activity. The precursor protein but not the mature protein may form multimers. Interacts with APOB, VLDLR, LRP8/APOER2 and BACE1. The full-length immature form (pro-PCSK9) interacts with SCNN1A, SCNN1B and SCNN1G. The pro-PCSK9 form (via C-terminal domain) interacts with LDLR. Interacts (via the C-terminal domain) with ANXA2 (via repeat Annexin 1); the interaction inhibits the degradation of LDLR. It depends on Ca(2+) as a cofactor. Cleavage by furin and PCSK5 generates a truncated inactive protein that is unable to induce LDLR degradation. Post-translationally, undergoes autocatalytic cleavage in the endoplasmic reticulum to release the propeptide from the N-terminus and the cleavage of the propeptide is strictly required for its maturation and activation. The cleaved propeptide however remains associated with the catalytic domain through non-covalent interactions, preventing potential substrates from accessing its active site. As a result, it is secreted from cells as a propeptide-containing, enzymatically inactive protein. In terms of processing, phosphorylation protects the propeptide against proteolysis.

The protein resides in the cytoplasm. Its subcellular location is the secreted. It localises to the endosome. The protein localises to the lysosome. It is found in the cell surface. The protein resides in the endoplasmic reticulum. Its subcellular location is the golgi apparatus. With respect to regulation, its proteolytic activity is autoinhibited by the non-covalent binding of the propeptide to the catalytic domain. Inhibited by EGTA. Functionally, crucial player in the regulation of plasma cholesterol homeostasis. Binds to low-density lipid receptor family members: low density lipoprotein receptor (LDLR), very low density lipoprotein receptor (VLDLR), apolipoprotein E receptor (LRP1/APOER) and apolipoprotein receptor 2 (LRP8/APOER2), and promotes their degradation in intracellular acidic compartments. Acts via a non-proteolytic mechanism to enhance the degradation of the hepatic LDLR through a clathrin LDLRAP1/ARH-mediated pathway. May prevent the recycling of LDLR from endosomes to the cell surface or direct it to lysosomes for degradation. Can induce ubiquitination of LDLR leading to its subsequent degradation. Inhibits intracellular degradation of APOB via the autophagosome/lysosome pathway in a LDLR-independent manner. Involved in the disposal of non-acetylated intermediates of BACE1 in the early secretory pathway. Inhibits epithelial Na(+) channel (ENaC)-mediated Na(+) absorption by reducing ENaC surface expression primarily by increasing its proteasomal degradation. Regulates neuronal apoptosis via modulation of LRP8/APOER2 levels and related anti-apoptotic signaling pathways. The protein is Proprotein convertase subtilisin/kexin type 9 (PCSK9) of Colobus guereza (Mantled guereza).